The sequence spans 311 residues: Ribose-phosphate pyrophosphokinase (311 aa).

Residues 37–39 (DGE) and 96–97 (RQ) contribute to the ATP site. Mg(2+)-binding residues include His130 and Asp170. Residue Lys193 is part of the active site. D-ribose 5-phosphate-binding positions include Arg195, Asp219, and 223–227 (DTAGT).

The protein belongs to the ribose-phosphate pyrophosphokinase family. Class I subfamily. Homohexamer. It depends on Mg(2+) as a cofactor.

Its subcellular location is the cytoplasm. The enzyme catalyses D-ribose 5-phosphate + ATP = 5-phospho-alpha-D-ribose 1-diphosphate + AMP + H(+). It functions in the pathway metabolic intermediate biosynthesis; 5-phospho-alpha-D-ribose 1-diphosphate biosynthesis; 5-phospho-alpha-D-ribose 1-diphosphate from D-ribose 5-phosphate (route I): step 1/1. Functionally, involved in the biosynthesis of the central metabolite phospho-alpha-D-ribosyl-1-pyrophosphate (PRPP) via the transfer of pyrophosphoryl group from ATP to 1-hydroxyl of ribose-5-phosphate (Rib-5-P). The chain is Ribose-phosphate pyrophosphokinase from Aquifex aeolicus (strain VF5).